Reading from the N-terminus, the 501-residue chain is METKDLIVIGGGINGAGIAADAAGRGLSVLMLEAQDLACATSSASSKLIHGGLRYLEHYEFRLVSEALAEREVLLKMAPHIAFPMRFRLPHRPHLRPAWMIRIGLFMYDHLGKRTSLPGSTGLRFGANSVLKPEIKRGFEYSDCWVDDARLVLANAQMVVRKGGEVLTRTRATSARRENGLWIVEAEDIDTGKKYSWQARGLVNATGPWVKQFFDDGMHLPSPYGIRLIKGSHIVVPRVHTQKQAYILQNEDKRIVFVIPWMDEFSIIGTTDVEYKGDPKAVKIEESEINYLLNVYNTHFKKQLSRDDIVWTYSGVRPLCDDESDSPQAITRDYTLDIHDENGKAPLLSVFGGKLTTYRKLAEHALEKLTPYYQGIGPAWTKESVLPGGAIEGDRDDYAARLRRRYPFLTESLARHYARTYGSNSELLLGNAGTVSDLGEDFGHEFYEAELKYLVDHEWVRRADDALWRRTKQGMWLNADQQSRVSQWLVEYTQQRLSLAS.

5–33 (DLIVIGGGINGAGIAADAAGRGLSVLMLE) provides a ligand contact to FAD.

This sequence belongs to the FAD-dependent glycerol-3-phosphate dehydrogenase family. FAD is required as a cofactor.

It localises to the cytoplasm. It carries out the reaction a quinone + sn-glycerol 3-phosphate = dihydroxyacetone phosphate + a quinol. Its pathway is polyol metabolism; glycerol degradation via glycerol kinase pathway; glycerone phosphate from sn-glycerol 3-phosphate (aerobic route): step 1/1. Functionally, conversion of glycerol 3-phosphate to dihydroxyacetone. Uses molecular oxygen or nitrate as electron acceptor. This Escherichia coli (strain K12) protein is Aerobic glycerol-3-phosphate dehydrogenase (glpD).